The following is a 389-amino-acid chain: Major outer membrane porin (389 aa).

An N-terminal signal peptide occupies residues Met1–Ala23.

Belongs to the chlamydial porin (CP) (TC 1.B.2) family. Part of a disulfide cross-linked outer membrane complex (COMC) composed of the major outer membrane porin (MOMP), the small cysteine-rich protein (OmcA) and the large cysteine-rich periplasmic protein (OmcB).

It localises to the cell outer membrane. Its function is as follows. In elementary bodies (EBs, the infectious stage, which is able to survive outside the host cell) provides the structural integrity of the outer envelope through disulfide cross-links with the small cysteine-rich protein and the large cysteine-rich periplasmic protein. It has been described in publications as the Sarkosyl-insoluble COMC (Chlamydia outer membrane complex), and serves as the functional equivalent of peptidoglycan. Functionally, permits diffusion of specific solutes through the outer membrane. This chain is Major outer membrane porin (ompA), found in Chlamydia pneumoniae (Chlamydophila pneumoniae).